We begin with the raw amino-acid sequence, 491 residues long: uncharacterized protein (491 aa).

Substrate is bound at residue W99. N137 serves as a coordination point for Ca(2+). H138 is a substrate binding site. Residues E177 and D190 each coordinate Ca(2+). R219 provides a ligand contact to substrate. D221, H225, and E245 together coordinate Ca(2+). D221 functions as the Nucleophile in the catalytic mechanism. Residue 224 to 225 (KH) coordinates substrate. E245 functions as the Proton donor in the catalytic mechanism. 3 residues coordinate substrate: G249, H312, and R360.

Belongs to the glycosyl hydrolase 13 family. The cofactor is Ca(2+).

It localises to the cytoplasm. The protein localises to the nucleus. This is an uncharacterized protein from Schizosaccharomyces pombe (strain 972 / ATCC 24843) (Fission yeast).